A 111-amino-acid chain; its full sequence is MALLKITLLFAVTAITEIVGCYLPWLVIKQGKSLWLLVPAALSLAIFAWLLTLHPTAAGRTYAAYGGMYVVVALIWLHFVEGVGLTRFDFLGATMALAGMAIIALQPISHS.

Transmembrane regions (helical) follow at residues 8 to 28 (LLFA…WLVI), 33 to 53 (SLWL…LLTL), 65 to 85 (YGGM…GVGL), and 88 to 108 (FDFL…LQPI).

Belongs to the UPF0060 family.

The protein resides in the cell inner membrane. The polypeptide is UPF0060 membrane protein HCH_03337 (Hahella chejuensis (strain KCTC 2396)).